A 732-amino-acid polypeptide reads, in one-letter code: Probable ATP-dependent RNA helicase DHX35 homolog (732 aa).

Positions 1–50 (MSYHPGHGHRQEPRKGAGARRGFARPDDSADAPRTGPLIFEERSTENAGA) are disordered. The Helicase ATP-binding domain maps to 87–251 (LYMCERYRTI…FEMNETGNSD (165 aa)). 100–107 (GETGCGKS) contacts ATP. Residues 198–201 (DEAH) carry the DEAH box motif. Residues 283-457 (AVDTVINIHK…STILQLKALG (175 aa)) form the Helicase C-terminal domain.

It belongs to the DEAD box helicase family. DEAH subfamily.

The enzyme catalyses ATP + H2O = ADP + phosphate + H(+). The chain is Probable ATP-dependent RNA helicase DHX35 homolog from Caenorhabditis elegans.